The primary structure comprises 518 residues: GMP synthase [glutamine-hydrolyzing] (518 aa).

A Glutamine amidotransferase type-1 domain is found at 6-200; sequence RLLIIDFGSQ…FVKLAGFKGD (195 aa). Cys84 functions as the Nucleophile in the catalytic mechanism. Residues His175 and Glu177 contribute to the active site. One can recognise a GMPS ATP-PPase domain in the interval 201–393; sequence WTMGAYREEA…LGLPDSFIGR (193 aa). Residue 228–234 participates in ATP binding; the sequence is SGGVDSS.

In terms of assembly, homodimer.

The catalysed reaction is XMP + L-glutamine + ATP + H2O = GMP + L-glutamate + AMP + diphosphate + 2 H(+). It functions in the pathway purine metabolism; GMP biosynthesis; GMP from XMP (L-Gln route): step 1/1. Its function is as follows. Catalyzes the synthesis of GMP from XMP. The chain is GMP synthase [glutamine-hydrolyzing] from Cereibacter sphaeroides (strain ATCC 17025 / ATH 2.4.3) (Rhodobacter sphaeroides).